Reading from the N-terminus, the 829-residue chain is Disintegrin and metalloproteinase domain-containing protein 23 (829 aa).

An N-terminal signal peptide occupies residues 1–55; it reads MKPPGSISRRPTLTGCSLPGASCGPGRCPAGPVPARAPPCRLLLVLLLLPALATS. Positions 56–283 are excised as a propeptide; that stretch reads SRPRARGAAA…ELQWLRRRKR (228 aa). 4 N-linked (GlcNAc...) asparagine glycosylation sites follow: asparagine 72, asparagine 92, asparagine 97, and asparagine 260. The Extracellular portion of the chain corresponds to 284-789; that stretch reads AVNPSRGVFE…EGPKGPSATN (506 aa). The Peptidase M12B domain maps to 296–493; the sequence is KYLELMIVND…GGGACLFNRP (198 aa). Intrachain disulfides connect cysteine 405–cysteine 488, cysteine 447–cysteine 472, and cysteine 449–cysteine 456. The region spanning 499-585 is the Disintegrin domain; the sequence is PTECGNGYVE…QCPPNLHKQD (87 aa). Asparagine 544 and asparagine 545 each carry an N-linked (GlcNAc...) asparagine glycan. A disulfide bridge links cysteine 557 with cysteine 577. Asparagine 661 and asparagine 729 each carry an N-linked (GlcNAc...) asparagine glycan. An EGF-like domain is found at 729–766; that stretch reads NMSSCPLDSRGKVCSGHGVCSNEATCICDFTWAGTDCS. Cystine bridges form between cysteine 733–cysteine 748, cysteine 742–cysteine 754, and cysteine 756–cysteine 765. A helical transmembrane segment spans residues 790 to 810; that stretch reads LIIGSIAGAILVAAIVLGGTG. Residues 811–829 are Cytoplasmic-facing; that stretch reads WGFKNVKKRRFDPTQQGPI.

As to quaternary structure, can bind to LGI1 and LGI4. In terms of tissue distribution, brain specific.

The protein localises to the cell membrane. It is found in the secreted. May play a role in cell-cell and cell-matrix interactions. This is a non-catalytic metalloprotease-like protein. This is Disintegrin and metalloproteinase domain-containing protein 23 (Adam23) from Mus musculus (Mouse).